Consider the following 604-residue polypeptide: Glutamyl-tRNA(Gln) amidotransferase subunit B, mitochondrial (604 aa).

A mitochondrion-targeting transit peptide spans Met1–Ser48. The interval Phe28–Arg57 is disordered. Residues Ser33–Arg46 show a composition bias toward polar residues.

Belongs to the GatB/GatE family. GatB subfamily. As to quaternary structure, subunit of the heterotrimeric GatCAB amidotransferase (AdT) complex, composed of A, B and C subunits.

Its subcellular location is the mitochondrion. It carries out the reaction L-glutamyl-tRNA(Gln) + L-glutamine + ATP + H2O = L-glutaminyl-tRNA(Gln) + L-glutamate + ADP + phosphate + H(+). Allows the formation of correctly charged Gln-tRNA(Gln) through the transamidation of misacylated Glu-tRNA(Gln) in the mitochondria. The reaction takes place in the presence of glutamine and ATP through an activated gamma-phospho-Glu-tRNA(Gln). This is Glutamyl-tRNA(Gln) amidotransferase subunit B, mitochondrial from Ajellomyces dermatitidis (strain ER-3 / ATCC MYA-2586) (Blastomyces dermatitidis).